The following is a 459-amino-acid chain: tRNA modification GTPase MnmE (459 aa).

(6S)-5-formyl-5,6,7,8-tetrahydrofolate is bound by residues R30, E93, and K132. The TrmE-type G domain occupies 226–381 (GVTMAIVGKP…LEEKILESVK (156 aa)). N236 contributes to the K(+) binding site. Residues 236-241 (NVGKST), 255-261 (TDIPGTT), and 280-283 (DTAG) contribute to the GTP site. Mg(2+) is bound at residue S240. K(+) is bound by residues T255, I257, and T260. T261 is a binding site for Mg(2+). K459 serves as a coordination point for (6S)-5-formyl-5,6,7,8-tetrahydrofolate.

This sequence belongs to the TRAFAC class TrmE-Era-EngA-EngB-Septin-like GTPase superfamily. TrmE GTPase family. In terms of assembly, homodimer. Heterotetramer of two MnmE and two MnmG subunits. K(+) is required as a cofactor.

The protein resides in the cytoplasm. In terms of biological role, exhibits a very high intrinsic GTPase hydrolysis rate. Involved in the addition of a carboxymethylaminomethyl (cmnm) group at the wobble position (U34) of certain tRNAs, forming tRNA-cmnm(5)s(2)U34. The protein is tRNA modification GTPase MnmE of Fervidobacterium nodosum (strain ATCC 35602 / DSM 5306 / Rt17-B1).